Reading from the N-terminus, the 462-residue chain is Fumarate hydratase class II (462 aa).

Residues 97–99 (SGT), 127–130 (HPND), 137–139 (SSN), and T185 contribute to the substrate site. H186 functions as the Proton donor/acceptor in the catalytic mechanism. S316 is a catalytic residue. Substrate is bound by residues S317 and 322 to 324 (KVN).

Belongs to the class-II fumarase/aspartase family. Fumarase subfamily. In terms of assembly, homotetramer.

The protein resides in the cytoplasm. The enzyme catalyses (S)-malate = fumarate + H2O. Its pathway is carbohydrate metabolism; tricarboxylic acid cycle; (S)-malate from fumarate: step 1/1. Involved in the TCA cycle. Catalyzes the stereospecific interconversion of fumarate to L-malate. The sequence is that of Fumarate hydratase class II from Bacillus cereus (strain ATCC 14579 / DSM 31 / CCUG 7414 / JCM 2152 / NBRC 15305 / NCIMB 9373 / NCTC 2599 / NRRL B-3711).